Consider the following 648-residue polypeptide: Biosynthetic arginine decarboxylase (648 aa).

K109 carries the post-translational modification N6-(pyridoxal phosphate)lysine. 291–301 (IDVGGGLGIDF) is a binding site for substrate.

It belongs to the Orn/Lys/Arg decarboxylase class-II family. SpeA subfamily. The cofactor is Mg(2+). It depends on pyridoxal 5'-phosphate as a cofactor.

The enzyme catalyses L-arginine + H(+) = agmatine + CO2. It participates in amine and polyamine biosynthesis; agmatine biosynthesis; agmatine from L-arginine: step 1/1. Catalyzes the biosynthesis of agmatine from arginine. The chain is Biosynthetic arginine decarboxylase from Prochlorococcus marinus (strain MIT 9215).